A 617-amino-acid chain; its full sequence is Proline--tRNA ligase (617 aa).

It belongs to the class-II aminoacyl-tRNA synthetase family. ProS type 1 subfamily. Homodimer.

It localises to the cytoplasm. The catalysed reaction is tRNA(Pro) + L-proline + ATP = L-prolyl-tRNA(Pro) + AMP + diphosphate. Its function is as follows. Catalyzes the attachment of proline to tRNA(Pro) in a two-step reaction: proline is first activated by ATP to form Pro-AMP and then transferred to the acceptor end of tRNA(Pro). As ProRS can inadvertently accommodate and process non-cognate amino acids such as alanine and cysteine, to avoid such errors it has two additional distinct editing activities against alanine. One activity is designated as 'pretransfer' editing and involves the tRNA(Pro)-independent hydrolysis of activated Ala-AMP. The other activity is designated 'posttransfer' editing and involves deacylation of mischarged Ala-tRNA(Pro). The misacylated Cys-tRNA(Pro) is not edited by ProRS. The polypeptide is Proline--tRNA ligase (Streptococcus agalactiae serotype V (strain ATCC BAA-611 / 2603 V/R)).